Here is a 458-residue protein sequence, read N- to C-terminus: UPF0210 protein MMP1427 (458 aa).

It belongs to the UPF0210 family.

This is UPF0210 protein MMP1427 from Methanococcus maripaludis (strain DSM 14266 / JCM 13030 / NBRC 101832 / S2 / LL).